The chain runs to 295 residues: Ribosomal protein L11 methyltransferase (295 aa).

S-adenosyl-L-methionine-binding residues include Thr-150, Gly-171, Asp-193, and Asn-232.

Belongs to the methyltransferase superfamily. PrmA family.

It is found in the cytoplasm. The enzyme catalyses L-lysyl-[protein] + 3 S-adenosyl-L-methionine = N(6),N(6),N(6)-trimethyl-L-lysyl-[protein] + 3 S-adenosyl-L-homocysteine + 3 H(+). Functionally, methylates ribosomal protein L11. The polypeptide is Ribosomal protein L11 methyltransferase (Methylobacillus flagellatus (strain ATCC 51484 / DSM 6875 / VKM B-1610 / KT)).